The sequence spans 27 residues: Putative phosphoglycerate kinase (27 aa).

This sequence belongs to the phosphoglycerate kinase family. As to quaternary structure, monomer. Mg(2+) is required as a cofactor.

It catalyses the reaction (2R)-3-phosphoglycerate + ATP = (2R)-3-phospho-glyceroyl phosphate + ADP. The chain is Putative phosphoglycerate kinase from Pinus strobus (Eastern white pine).